Consider the following 276-residue polypeptide: MNAMTLATLPVRLEALVFDWAGTLVDFGSFAPTKVFVDAFARFGVQISLEQARGPMGMGKWDHIRALCNDAAIARQYQEQFGRLPTDEDVTAIYERFLPMQLEKVAEYSQPIPGAIELLHGLRQRGLKLGSCSGYPAAVMQRVLERAEREGLALDYVVASDDVPRSRPAPAMALRNVVELGIADVAGCVKVDDTAPGVEEGRRAGMWTVGLLLSGNAAGLSLEQFLSLDEAGREAARDRARAELQAGAPHYLIDTVADLPPVLADIETRLAAGQRP.

Residue Asp19 is the Nucleophile of the active site. Mg(2+) contacts are provided by Asp19 and Ala21. Lys60 serves as the catalytic Schiff-base intermediate with substrate. Asp193 is a Mg(2+) binding site.

Belongs to the HAD-like hydrolase superfamily. PhnX family. In terms of assembly, homodimer. The cofactor is Mg(2+).

The enzyme catalyses phosphonoacetaldehyde + H2O = acetaldehyde + phosphate + H(+). Involved in phosphonate degradation. This is Phosphonoacetaldehyde hydrolase from Bordetella bronchiseptica (strain ATCC BAA-588 / NCTC 13252 / RB50) (Alcaligenes bronchisepticus).